A 506-amino-acid polypeptide reads, in one-letter code: Anaerobic nitric oxide reductase transcription regulator NorR (506 aa).

A 4-aspartylphosphate modification is found at D57. The Sigma-54 factor interaction domain maps to 187–416 (MIGLSPAMTQ…LEHAIHRAVV (230 aa)). ATP contacts are provided by residues 215–222 (GETGTGKE) and 278–287 (ADNGTLFLDE). Residues 481–500 (WAASARALETDVANLHRLAK) constitute a DNA-binding region (H-T-H motif).

The protein operates within nitrogen metabolism; nitric oxide reduction. Required for the expression of anaerobic nitric oxide (NO) reductase, acts as a transcriptional activator for at least the norVW operon. Activation also requires sigma-54. This Salmonella dublin (strain CT_02021853) protein is Anaerobic nitric oxide reductase transcription regulator NorR.